The primary structure comprises 71 residues: DNA-directed RNA polymerase subunit epsilon (71 aa).

It belongs to the RNA polymerase subunit epsilon family. RNAP is composed of a core of 2 alpha, a beta and a beta' subunit. The core is associated with a delta subunit, and at least one of epsilon or omega. When a sigma factor is associated with the core the holoenzyme is formed, which can initiate transcription.

The catalysed reaction is RNA(n) + a ribonucleoside 5'-triphosphate = RNA(n+1) + diphosphate. Functionally, a non-essential component of RNA polymerase (RNAP). The sequence is that of DNA-directed RNA polymerase subunit epsilon from Anoxybacillus flavithermus (strain DSM 21510 / WK1).